The primary structure comprises 426 residues: D-cysteine desulfhydrase 1, mitochondrial (426 aa).

A mitochondrion-targeting transit peptide spans 1–63 (MARGAHQAPG…IGSFLSKRPY (63 aa)). Lysine 119 carries the post-translational modification N6-(pyridoxal phosphate)lysine. Serine 146 (nucleophile) is an active-site residue.

Belongs to the ACC deaminase/D-cysteine desulfhydrase family. As to quaternary structure, homodimer. Requires pyridoxal 5'-phosphate as cofactor. As to expression, present in seeds (at protein level).

The protein localises to the mitochondrion. The catalysed reaction is D-cysteine + H2O = hydrogen sulfide + pyruvate + NH4(+) + H(+). Inhibited by L-cysteine (L-cys). In terms of biological role, catalyzes the production of hydrogen sulfide (H2S) from D-cysteine (D-cys). In Oryza sativa subsp. japonica (Rice), this protein is D-cysteine desulfhydrase 1, mitochondrial.